The primary structure comprises 774 residues: Armadillo-like helical domain-containing protein 4 (774 aa).

The first 27 residues, 1 to 27 (MRGPIVLHICLAFCSLLLFSVATQCLA), serve as a signal peptide directing secretion. Over 28–714 (FPKIERRREI…KDKAGYMSGM (687 aa)) the chain is Extracellular. Positions 41–52 (HAEKGQSDKMNT) are enriched in basic and acidic residues. Disordered regions lie at residues 41-63 (HAEK…VTSK) and 97-135 (QPGQ…ERIS). Asn57 carries an N-linked (GlcNAc...) asparagine glycan. Asn189 carries N-linked (GlcNAc...) asparagine glycosylation. Residues 221 to 233 (KTEKFEADTDHRT) show a composition bias toward basic and acidic residues. Disordered regions lie at residues 221 to 275 (KTEK…QPLE) and 600 to 669 (ASYG…PGLE). The span at 258-275 (SQMTADNTQAAATKQPLE) shows a compositional bias: polar residues. A compositionally biased stretch (acidic residues) spans 607 to 651 (LESEEGQEDEDEEDEEDEDEEEEDEEEDEEDKDADSLDEGLDGDT). Residues 715-735 (LVPVGVGIAGALFILGALYSI) form a helical membrane-spanning segment. Topologically, residues 736–774 (KVMNRRRRNGFKRHKRKQREFNSMQDRVMLLADSSEDEF) are cytoplasmic. Phosphoserine is present on residues Ser769 and Ser770.

As to quaternary structure, interacts with IL6ST; this interaction prevents IL6ST protein homodimerization and bridges ARMH4 with IL6R and STAT3 and therefore inhibits phosphorylation of STAT3 at 'Tyr-705'. Interacts (via cytoplasmic tail) with RICTOR; this interaction bridges ARMH4 to the mTORC2 complex and inhibits the mTORC2 kinase activity. Expressed in podocytes.

It is found in the membrane. In terms of biological role, may modulate immune response and may play a role in inflammation. Down-modulates STAT3 signaling throught direct interaction with IL6ST, resulting in the inhibition of phosphorylation of STAT3 at 'Tyr-705'. May negatively regulates AKT signaling by modulating the activity of mTORC2 complex through RICTOR interaction. In Homo sapiens (Human), this protein is Armadillo-like helical domain-containing protein 4.